Reading from the N-terminus, the 337-residue chain is GTPase Obg (337 aa).

One can recognise an Obg domain in the interval 1–159 (MQFIDYVKIY…RWVILELKLL (159 aa)). Residues 160–331 (ADVGLIGLPN…LLHYLSEKVG (172 aa)) form the OBG-type G domain. GTP-binding positions include 166–173 (GLPNAGKS), 191–195 (FTTLI), 213–216 (DIPG), 283–286 (TKID), and 312–314 (SAV). The Mg(2+) site is built by serine 173 and threonine 193.

This sequence belongs to the TRAFAC class OBG-HflX-like GTPase superfamily. OBG GTPase family. In terms of assembly, monomer. Mg(2+) serves as cofactor.

Its subcellular location is the cytoplasm. An essential GTPase which binds GTP, GDP and possibly (p)ppGpp with moderate affinity, with high nucleotide exchange rates and a fairly low GTP hydrolysis rate. Plays a role in control of the cell cycle, stress response, ribosome biogenesis and in those bacteria that undergo differentiation, in morphogenesis control. In Thermodesulfovibrio yellowstonii (strain ATCC 51303 / DSM 11347 / YP87), this protein is GTPase Obg.